A 102-amino-acid chain; its full sequence is NADH-quinone oxidoreductase subunit K (102 aa).

3 consecutive transmembrane segments (helical) span residues 5-25, 31-51, and 62-82; these read LGHF…GIFL, IVLL…FVAF, and IFVF…LALL.

It belongs to the complex I subunit 4L family. As to quaternary structure, NDH-1 is composed of 14 different subunits. Subunits NuoA, H, J, K, L, M, N constitute the membrane sector of the complex.

The protein resides in the cell inner membrane. It carries out the reaction a quinone + NADH + 5 H(+)(in) = a quinol + NAD(+) + 4 H(+)(out). Functionally, NDH-1 shuttles electrons from NADH, via FMN and iron-sulfur (Fe-S) centers, to quinones in the respiratory chain. The immediate electron acceptor for the enzyme in this species is believed to be ubiquinone. Couples the redox reaction to proton translocation (for every two electrons transferred, four hydrogen ions are translocated across the cytoplasmic membrane), and thus conserves the redox energy in a proton gradient. This Variovorax paradoxus (strain S110) protein is NADH-quinone oxidoreductase subunit K.